A 479-amino-acid polypeptide reads, in one-letter code: Aspartyl/glutamyl-tRNA(Asn/Gln) amidotransferase subunit B (479 aa).

Belongs to the GatB/GatE family. GatB subfamily. Heterotrimer of A, B and C subunits.

It carries out the reaction L-glutamyl-tRNA(Gln) + L-glutamine + ATP + H2O = L-glutaminyl-tRNA(Gln) + L-glutamate + ADP + phosphate + H(+). It catalyses the reaction L-aspartyl-tRNA(Asn) + L-glutamine + ATP + H2O = L-asparaginyl-tRNA(Asn) + L-glutamate + ADP + phosphate + 2 H(+). Its function is as follows. Allows the formation of correctly charged Asn-tRNA(Asn) or Gln-tRNA(Gln) through the transamidation of misacylated Asp-tRNA(Asn) or Glu-tRNA(Gln) in organisms which lack either or both of asparaginyl-tRNA or glutaminyl-tRNA synthetases. The reaction takes place in the presence of glutamine and ATP through an activated phospho-Asp-tRNA(Asn) or phospho-Glu-tRNA(Gln). The sequence is that of Aspartyl/glutamyl-tRNA(Asn/Gln) amidotransferase subunit B from Streptococcus pyogenes serotype M28 (strain MGAS6180).